An 80-amino-acid polypeptide reads, in one-letter code: Large ribosomal subunit protein uL29 (80 aa).

Belongs to the universal ribosomal protein uL29 family.

The chain is Large ribosomal subunit protein uL29 from Saccharopolyspora erythraea (strain ATCC 11635 / DSM 40517 / JCM 4748 / NBRC 13426 / NCIMB 8594 / NRRL 2338).